Reading from the N-terminus, the 219-residue chain is Large ribosomal subunit protein uL16y (219 aa).

The protein belongs to the universal ribosomal protein uL16 family. As to quaternary structure, component of the small ribosomal subunit. Mature ribosomes consist of a small (40S) and a large (60S) subunit. The 40S subunit contains about 33 different proteins and 1 molecule of RNA (18S). The 60S subunit contains about 49 different proteins and 3 molecules of RNA (25S, 5.8S and 5S).

The chain is Large ribosomal subunit protein uL16y (SG12) from Oryza sativa subsp. japonica (Rice).